The following is a 216-amino-acid chain: MOB kinase activator-like 2A (216 aa).

Zn(2+) contacts are provided by Cys81, Cys86, His162, and His167.

Belongs to the MOB1/phocein family.

The protein localises to the nucleus. In Arabidopsis thaliana (Mouse-ear cress), this protein is MOB kinase activator-like 2A.